A 211-amino-acid polypeptide reads, in one-letter code: Protein-methionine-sulfoxide reductase heme-binding subunit MsrQ (211 aa).

4 helical membrane passes run 10–30, 82–102, 116–136, and 153–173; these read WLKVCLHLAGLLPFLWLVWAI, LWCFAWATLHLTSYALLELGV, PYLTLGIISWIILLALAFTST, and FVYLVAILAPIHYLWSVKIIS.

The protein belongs to the MsrQ family. As to quaternary structure, heterodimer of a catalytic subunit (MsrP) and a heme-binding subunit (MsrQ). The cofactor is FMN. Heme b serves as cofactor.

It localises to the cell inner membrane. In terms of biological role, part of the MsrPQ system that repairs oxidized periplasmic proteins containing methionine sulfoxide residues (Met-O), using respiratory chain electrons. Thus protects these proteins from oxidative-stress damage caused by reactive species of oxygen and chlorine generated by the host defense mechanisms. MsrPQ is essential for the maintenance of envelope integrity under bleach stress, rescuing a wide series of structurally unrelated periplasmic proteins from methionine oxidation, including the primary periplasmic chaperone SurA and the lipoprotein Pal. MsrQ provides electrons for reduction to the reductase catalytic subunit MsrP, using the quinone pool of the respiratory chain. In Escherichia coli O157:H7, this protein is Protein-methionine-sulfoxide reductase heme-binding subunit MsrQ.